Consider the following 29-residue polypeptide: Trypsin inhibitor 1 (29 aa).

Intrachain disulfides connect Cys-3–Cys-20, Cys-10–Cys-22, and Cys-16–Cys-28.

It belongs to the protease inhibitor I7 (squash-type serine protease inhibitor) family.

It localises to the secreted. Inhibits trypsin. The polypeptide is Trypsin inhibitor 1 (Cucurbita maxima (Pumpkin)).